The following is a 152-amino-acid chain: Probable ribose-5-phosphate isomerase B (152 aa).

10–11 (DH) is a binding site for D-ribulose 5-phosphate. The active-site Proton acceptor is the Cys-69. A D-ribulose 5-phosphate-binding site is contributed by 70–74 (GTGVG). His-102 (proton donor) is an active-site residue. Residues Asp-103, Arg-113, Arg-136, and Arg-140 each coordinate D-ribulose 5-phosphate.

The protein belongs to the LacAB/RpiB family. In terms of assembly, homodimer.

It carries out the reaction aldehydo-D-ribose 5-phosphate = D-ribulose 5-phosphate. The protein operates within carbohydrate degradation; pentose phosphate pathway; D-ribose 5-phosphate from D-ribulose 5-phosphate (non-oxidative stage): step 1/1. Catalyzes the interconversion of ribulose-5-P and ribose-5-P. The sequence is that of Probable ribose-5-phosphate isomerase B from Mycoplasma genitalium (strain ATCC 33530 / DSM 19775 / NCTC 10195 / G37) (Mycoplasmoides genitalium).